The following is a 158-amino-acid chain: Transcription antitermination protein NusB (158 aa).

A compositionally biased stretch (basic and acidic residues) spans 1–12 (MKRVEKRAEKQG). The segment at 1 to 20 (MKRVEKRAEKQGRGTARKSR) is disordered.

This sequence belongs to the NusB family.

Involved in transcription antitermination. Required for transcription of ribosomal RNA (rRNA) genes. Binds specifically to the boxA antiterminator sequence of the ribosomal RNA (rrn) operons. The polypeptide is Transcription antitermination protein NusB (Nitrosospira multiformis (strain ATCC 25196 / NCIMB 11849 / C 71)).